A 121-amino-acid chain; its full sequence is Small ribosomal subunit protein uS13 (121 aa).

The interval 91-121 is disordered; it reads HRMSLPVRGQRTRTNARTRRGSRKTVAGRKK. A compositionally biased stretch (basic residues) spans 100–121; the sequence is QRTRTNARTRRGSRKTVAGRKK.

Belongs to the universal ribosomal protein uS13 family. As to quaternary structure, part of the 30S ribosomal subunit. Forms a loose heterodimer with protein S19. Forms two bridges to the 50S subunit in the 70S ribosome.

In terms of biological role, located at the top of the head of the 30S subunit, it contacts several helices of the 16S rRNA. In the 70S ribosome it contacts the 23S rRNA (bridge B1a) and protein L5 of the 50S subunit (bridge B1b), connecting the 2 subunits; these bridges are implicated in subunit movement. Contacts the tRNAs in the A and P-sites. This is Small ribosomal subunit protein uS13 from Prochlorococcus marinus (strain SARG / CCMP1375 / SS120).